Here is a 79-residue protein sequence, read N- to C-terminus: Small ribosomal subunit protein bS16 (79 aa).

This sequence belongs to the bacterial ribosomal protein bS16 family.

The protein is Small ribosomal subunit protein bS16 of Desulfovibrio desulfuricans (strain ATCC 27774 / DSM 6949 / MB).